Consider the following 305-residue polypeptide: Aspartate carbamoyltransferase catalytic subunit (305 aa).

Residues arginine 54 and threonine 55 each contribute to the carbamoyl phosphate site. Lysine 83 contributes to the L-aspartate binding site. Positions 104, 132, and 135 each coordinate carbamoyl phosphate. The L-aspartate site is built by arginine 165 and arginine 226. Residues leucine 265 and proline 266 each coordinate carbamoyl phosphate.

It belongs to the aspartate/ornithine carbamoyltransferase superfamily. ATCase family. In terms of assembly, heterooligomer of catalytic and regulatory chains.

The enzyme catalyses carbamoyl phosphate + L-aspartate = N-carbamoyl-L-aspartate + phosphate + H(+). It functions in the pathway pyrimidine metabolism; UMP biosynthesis via de novo pathway; (S)-dihydroorotate from bicarbonate: step 2/3. In terms of biological role, catalyzes the condensation of carbamoyl phosphate and aspartate to form carbamoyl aspartate and inorganic phosphate, the committed step in the de novo pyrimidine nucleotide biosynthesis pathway. The chain is Aspartate carbamoyltransferase catalytic subunit from Pyrobaculum arsenaticum (strain DSM 13514 / JCM 11321 / PZ6).